Here is a 729-residue protein sequence, read N- to C-terminus: Sodium-dependent neutral amino acid transporter B(0)AT2 (729 aa).

Residues 1–69 (MPKNSKVVKR…ARPAWNSKLQ (69 aa)) lie on the Cytoplasmic side of the membrane. Phosphoserine occurs at positions 25 and 55. The next 3 membrane-spanning stretches (helical) occupy residues 70–90 (YILA…FPYL), 98–117 (AYLL…LFFL), and 142–162 (GIGF…NVII). The Extracellular portion of the chain corresponds to 163-225 (GWSLFYFSQS…TSISESGGLN (63 aa)). 2 N-linked (GlcNAc...) asparagine glycosylation sites follow: Asn187 and Asn213. Helical transmembrane passes span 226 to 244 (WKMT…LAMI), 253 to 270 (IMYF…CFLI), 306 to 323 (VFFA…FSSY), and 335 to 356 (VLVS…FAVL). The Extracellular portion of the chain corresponds to 357–452 (GFKANVINEK…FIAFTEAMTH (96 aa)). 2 N-linked (GlcNAc...) asparagine glycosylation sites follow: Asn383 and Asn394. 5 helical membrane passes run 453-472 (FPAS…NLGL), 496-514 (ILTV…IFVQ), 530-550 (TLPL…VYGI), 571-592 (YMWK…IVNM), and 620-642 (VICI…IRRC). At 643–729 (NLIDDSSGNL…DMPDMPESDL (87 aa)) the chain is on the cytoplasmic side. Residues Ser687, Ser699, and Ser701 each carry the phosphoserine modification.

Belongs to the sodium:neurotransmitter symporter (SNF) (TC 2.A.22) family. SLC6A15 subfamily.

The protein resides in the membrane. The enzyme catalyses L-leucine(in) + Na(+)(in) = L-leucine(out) + Na(+)(out). It catalyses the reaction L-isoleucine(in) + Na(+)(in) = L-isoleucine(out) + Na(+)(out). The catalysed reaction is L-methionine(in) + Na(+)(in) = L-methionine(out) + Na(+)(out). It carries out the reaction L-proline(in) + Na(+)(in) = L-proline(out) + Na(+)(out). The enzyme catalyses L-alanine(in) + Na(+)(in) = L-alanine(out) + Na(+)(out). It catalyses the reaction L-asparagine(in) + Na(+)(in) = L-asparagine(out) + Na(+)(out). The catalysed reaction is L-valine(in) + Na(+)(in) = L-valine(out) + Na(+)(out). It carries out the reaction L-cysteine(in) + Na(+)(in) = L-cysteine(out) + Na(+)(out). The enzyme catalyses L-glutamine(in) + Na(+)(in) = L-glutamine(out) + Na(+)(out). It catalyses the reaction L-serine(in) + Na(+)(in) = L-serine(out) + Na(+)(out). The catalysed reaction is L-threonine(in) + Na(+)(in) = L-threonine(out) + Na(+)(out). It carries out the reaction L-pipecolate(in) + Na(+)(in) = L-pipecolate(out) + Na(+)(out). The enzyme catalyses L-phenylalanine(in) + Na(+)(in) = L-phenylalanine(out) + Na(+)(out). Functions as a sodium-dependent neutral amino acid transporter. Exhibits preference for the branched-chain amino acids, particularly leucine, valine and isoleucine and methionine. Can also transport low-affinity substrates such as alanine, phenylalanine, glutamine and pipecolic acid. Mediates the saturable, pH-sensitive and electrogenic cotransport of proline and sodium ions with a stoichiometry of 1:1. May have a role as transporter for neurotransmitter precursors into neurons. In contrast to other members of the neurotransmitter transporter family, does not appear to be chloride-dependent. In Bos taurus (Bovine), this protein is Sodium-dependent neutral amino acid transporter B(0)AT2 (SLC6A15).